The following is a 118-amino-acid chain: Small ribosomal subunit protein uS13 (118 aa).

Residues 94-118 are disordered; it reads SLPVRGQRTKTNARTRKGPRKAIKK.

Belongs to the universal ribosomal protein uS13 family. Part of the 30S ribosomal subunit. Forms a loose heterodimer with protein S19. Forms two bridges to the 50S subunit in the 70S ribosome.

Functionally, located at the top of the head of the 30S subunit, it contacts several helices of the 16S rRNA. In the 70S ribosome it contacts the 23S rRNA (bridge B1a) and protein L5 of the 50S subunit (bridge B1b), connecting the 2 subunits; these bridges are implicated in subunit movement. Contacts the tRNAs in the A and P-sites. This is Small ribosomal subunit protein uS13 from Aeromonas hydrophila subsp. hydrophila (strain ATCC 7966 / DSM 30187 / BCRC 13018 / CCUG 14551 / JCM 1027 / KCTC 2358 / NCIMB 9240 / NCTC 8049).